A 114-amino-acid chain; its full sequence is Large ribosomal subunit protein uL22 (114 aa).

The protein belongs to the universal ribosomal protein uL22 family. Part of the 50S ribosomal subunit.

In terms of biological role, this protein binds specifically to 23S rRNA; its binding is stimulated by other ribosomal proteins, e.g. L4, L17, and L20. It is important during the early stages of 50S assembly. It makes multiple contacts with different domains of the 23S rRNA in the assembled 50S subunit and ribosome. The globular domain of the protein is located near the polypeptide exit tunnel on the outside of the subunit, while an extended beta-hairpin is found that lines the wall of the exit tunnel in the center of the 70S ribosome. This chain is Large ribosomal subunit protein uL22, found in Streptococcus pyogenes serotype M6 (strain ATCC BAA-946 / MGAS10394).